The sequence spans 319 residues: Glutathione synthetase (319 aa).

Residues 129–314 enclose the ATP-grasp domain; the sequence is KLAILNFSRF…VAAMFADAVA (186 aa). Position 155-211 (155-211) interacts with ATP; it reads LKEHGDIIIKPLDGMGGMGIFRLTEKDPNIGSILETLMQLDSRTIMAQRYIPEIVHG. Positions 285 and 287 each coordinate Mg(2+).

This sequence belongs to the prokaryotic GSH synthase family. Requires Mg(2+) as cofactor. Mn(2+) serves as cofactor.

The enzyme catalyses gamma-L-glutamyl-L-cysteine + glycine + ATP = glutathione + ADP + phosphate + H(+). Its pathway is sulfur metabolism; glutathione biosynthesis; glutathione from L-cysteine and L-glutamate: step 2/2. The polypeptide is Glutathione synthetase (Neisseria meningitidis serogroup B (strain ATCC BAA-335 / MC58)).